The sequence spans 1019 residues: Collagen alpha-1(VI) chain (1019 aa).

A signal peptide spans 1 to 19 (MGLHDSFLALLLLLGGAWA). Residues 37-233 (DLFFVLDTSE…LDVEETINNI (197 aa)) form the VWFA 1 domain. An N-linked (GlcNAc...) asparagine glycan is attached at Asn212. The segment at 248–588 (FECHPPRGPP…GPPGPVGPPG (341 aa)) is disordered. The segment covering 253 to 262 (PRGPPGPPGD) has biased composition (pro residues). Basic and acidic residues-rich tracts occupy residues 299–332 (KGDK…DGMK) and 370–380 (GKGEPGEDGKP). The span at 427–436 (ERGPPGSPGD) shows a compositional bias: low complexity. A Cell attachment site motif is present at residues 476–478 (RGD). N-linked (GlcNAc...) asparagine glycosylation is present at Asn514. The Cell attachment site motif lies at 529–531 (RGD). N-linked (GlcNAc...) asparagine glycosylation is present at Asn535. Over residues 577-588 (RPGPPGPVGPPG) the composition is skewed to pro residues. VWFA domains lie at 613–800 (DLLF…LQNI) and 824–1012 (DIML…YQTV). N-linked (GlcNAc...) asparagine glycosylation is found at Asn799 and Asn887.

The protein belongs to the type VI collagen family. In terms of assembly, trimers composed of three different chains: alpha 1(VI), alpha 2(VI), and alpha 3(VI). In terms of processing, prolines at the third position of the tripeptide repeating unit (G-X-Y) are hydroxylated in some or all of the chains.

The protein resides in the secreted. It localises to the extracellular space. Its subcellular location is the extracellular matrix. Its function is as follows. Collagen VI acts as a cell-binding protein. The polypeptide is Collagen alpha-1(VI) chain (COL6A1) (Gallus gallus (Chicken)).